The following is a 361-amino-acid chain: Chorismate synthase (361 aa).

The NADP(+) site is built by R48 and R54. FMN-binding positions include 125-127, 238-239, G278, 293-297, and R319; these read RSS, NA, and KPTSS.

This sequence belongs to the chorismate synthase family. As to quaternary structure, homotetramer. FMNH2 is required as a cofactor.

The catalysed reaction is 5-O-(1-carboxyvinyl)-3-phosphoshikimate = chorismate + phosphate. It functions in the pathway metabolic intermediate biosynthesis; chorismate biosynthesis; chorismate from D-erythrose 4-phosphate and phosphoenolpyruvate: step 7/7. Functionally, catalyzes the anti-1,4-elimination of the C-3 phosphate and the C-6 proR hydrogen from 5-enolpyruvylshikimate-3-phosphate (EPSP) to yield chorismate, which is the branch point compound that serves as the starting substrate for the three terminal pathways of aromatic amino acid biosynthesis. This reaction introduces a second double bond into the aromatic ring system. This Escherichia coli O7:K1 (strain IAI39 / ExPEC) protein is Chorismate synthase.